The chain runs to 130 residues: Insulin-like growth factor 1 (130 aa).

A signal peptide spans 1 to 25 (MHAVSSSHLFYLAFCLLVLTSSATA). Positions 26–54 (GPETLCGAELVDALQFVCGDRGFYFNKPT) are b. 3 cysteine pairs are disulfide-bonded: Cys31–Cys73, Cys43–Cys86, and Cys72–Cys77. Residues 55–66 (GYGSSSRRAPQT) form a c region. Residues 67–87 (GIVDECCFRSCDLRRLEMYCA) form an a region. Residues 88-95 (PLKPAKSA) form a d region. Positions 96 to 130 (RSVRAQRHTDMPKTQKEVHLKNASRGSAGNKNYRM) are cleaved as a propeptide — e peptide. Positions 97 to 130 (SVRAQRHTDMPKTQKEVHLKNASRGSAGNKNYRM) are disordered. The span at 102 to 115 (RHTDMPKTQKEVHL) shows a compositional bias: basic and acidic residues. A compositionally biased stretch (polar residues) spans 119 to 130 (SRGSAGNKNYRM).

This sequence belongs to the insulin family. As to quaternary structure, forms a ternary complex with IGFR1 and ITGAV:ITGB3. Forms a ternary complex with IGFR1 and ITGA6:ITGB4. Forms a ternary complex with IGFBP3 and ALS.

The protein resides in the secreted. The insulin-like growth factors, isolated from plasma, are structurally and functionally related to insulin but have a much higher growth-promoting activity. May be a physiological regulator of [1-14C]-2-deoxy-D-glucose (2DG) transport and glycogen synthesis in osteoblasts. Stimulates glucose transport in bone-derived osteoblastic (PyMS) cells and is effective at much lower concentrations than insulin, not only regarding glycogen and DNA synthesis but also with regard to enhancing glucose uptake. May play a role in synapse maturation. Ca(2+)-dependent exocytosis of IGF1 is required for sensory perception of smell in the olfactory bulb. Acts as a ligand for IGF1R. Binds to the alpha subunit of IGF1R, leading to the activation of the intrinsic tyrosine kinase activity which autophosphorylates tyrosine residues in the beta subunit thus initiating a cascade of down-stream signaling events leading to activation of the PI3K-AKT/PKB and the Ras-MAPK pathways. Binds to integrins ITGAV:ITGB3 and ITGA6:ITGB4. Its binding to integrins and subsequent ternary complex formation with integrins and IGFR1 are essential for IGF1 signaling. Induces the phosphorylation and activation of IGFR1, MAPK3/ERK1, MAPK1/ERK2 and AKT1. As part of the MAPK/ERK signaling pathway, acts as a negative regulator of apoptosis in cardiomyocytes via promotion of STUB1/CHIP-mediated ubiquitination and degradation of ICER-type isoforms of CREM. The chain is Insulin-like growth factor 1 from Cavia porcellus (Guinea pig).